A 434-amino-acid polypeptide reads, in one-letter code: 4-hydroxy-3-methylbut-2-en-1-yl diphosphate synthase (flavodoxin) (434 aa).

The span at 1–15 shows a compositional bias: polar residues; it reads MQSEAQSPRSSQICS. Residues 1–24 form a disordered region; that stretch reads MQSEAQSPRSSQICSTEPVFGGHQ. [4Fe-4S] cluster contacts are provided by Cys322, Cys325, Cys368, and Glu375.

This sequence belongs to the IspG family. It depends on [4Fe-4S] cluster as a cofactor.

The enzyme catalyses (2E)-4-hydroxy-3-methylbut-2-enyl diphosphate + oxidized [flavodoxin] + H2O + 2 H(+) = 2-C-methyl-D-erythritol 2,4-cyclic diphosphate + reduced [flavodoxin]. Its pathway is isoprenoid biosynthesis; isopentenyl diphosphate biosynthesis via DXP pathway; isopentenyl diphosphate from 1-deoxy-D-xylulose 5-phosphate: step 5/6. Converts 2C-methyl-D-erythritol 2,4-cyclodiphosphate (ME-2,4cPP) into 1-hydroxy-2-methyl-2-(E)-butenyl 4-diphosphate. The protein is 4-hydroxy-3-methylbut-2-en-1-yl diphosphate synthase (flavodoxin) of Burkholderia cenocepacia (strain ATCC BAA-245 / DSM 16553 / LMG 16656 / NCTC 13227 / J2315 / CF5610) (Burkholderia cepacia (strain J2315)).